The sequence spans 495 residues: Cysteine--tRNA ligase (495 aa).

Cys-29 provides a ligand contact to Zn(2+). Residues 31 to 41 (PTVYDYGHIGN) carry the 'HIGH' region motif. Cys-211, His-236, and Glu-240 together coordinate Zn(2+). Residues 268–272 (KMSKS) carry the 'KMSKS' region motif. Lys-271 is a binding site for ATP.

The protein belongs to the class-I aminoacyl-tRNA synthetase family. In terms of assembly, monomer. Requires Zn(2+) as cofactor.

The protein localises to the cytoplasm. It catalyses the reaction tRNA(Cys) + L-cysteine + ATP = L-cysteinyl-tRNA(Cys) + AMP + diphosphate. The protein is Cysteine--tRNA ligase of Koribacter versatilis (strain Ellin345).